We begin with the raw amino-acid sequence, 237 residues long: Casparian strip membrane protein 2 (237 aa).

Residues 1–48 (MSGSDTSGSVHVDEHGHGHGKASSSYDGAGAPAPAPAPFQGHRKAGSG) are disordered. Topologically, residues 1–69 (MSGSDTSGSV…GSGGDGLRRC (69 aa)) are cytoplasmic. Residues 70 to 90 (LGLIDFVLRVAAFGPTLAAAI) form a helical membrane-spanning segment. The Extracellular portion of the chain corresponds to 91 to 117 (SIGTSDERLSVFTNYFQFRARFDDFPA). Residues 118 to 138 (FEFFIVANAIAAGYMVLSLPF) form a helical membrane-spanning segment. Residues 139 to 152 (SAATIMSSKATGVK) lie on the Cytoplasmic side of the membrane. Residues 153–173 (LLLLICDTIMVGLLTAAASAA) form a helical membrane-spanning segment. Residues 174-205 (AAMVYVAHEGNLRANWVPICLQFHGFCQRTSG) lie on the Extracellular side of the membrane. Residues 206–226 (AVIASFLAVFVLMVLIVMAAF) traverse the membrane as a helical segment. Residues 227–237 (TMPRRTHHTAS) lie on the Cytoplasmic side of the membrane.

This sequence belongs to the Casparian strip membrane proteins (CASP) family. As to quaternary structure, homodimer and heterodimers.

It is found in the cell membrane. Functionally, regulates membrane-cell wall junctions and localized cell wall deposition. Required for establishment of the Casparian strip membrane domain (CSD) and the subsequent formation of Casparian strips, a cell wall modification of the root endodermis that determines an apoplastic barrier between the intraorganismal apoplasm and the extraorganismal apoplasm and prevents lateral diffusion. The sequence is that of Casparian strip membrane protein 2 from Oryza sativa subsp. japonica (Rice).